We begin with the raw amino-acid sequence, 102 residues long: Cuticle protein 10.9 (102 aa).

The residue at position 1 (Gln1) is a Pyrrolidone carboxylic acid. Positions 1-45 (QLAEQYPPHPYSFSYDATDETGARISTSESGDESNSKTGSYSYQT) are disordered. In terms of domain architecture, Chitin-binding type R&amp;R spans 8-74 (PHPYSFSYDA…SIDTNEPGTK (67 aa)). Residues 36–45 (SKTGSYSYQT) show a composition bias toward polar residues.

Functionally, component of the cuticle of the tick. Binds chitin. This chain is Cuticle protein 10.9, found in Ixodes ricinus (Common tick).